We begin with the raw amino-acid sequence, 238 residues long: uncharacterized protein (238 aa).

A helical membrane pass occupies residues 10 to 33 (TLLALMISLSLSSLLLLSISHFYV).

It is found in the membrane. This is an uncharacterized protein from Haemophilus influenzae (strain ATCC 51907 / DSM 11121 / KW20 / Rd).